Consider the following 185-residue polypeptide: Peptidoglycan-recognition protein SC1a/b (185 aa).

The signal sequence occupies residues 1-21 (MVSKVALLLAVLVCSQYMAQG). One can recognise an N-acetylmuramoyl-L-alanine amidase domain in the interval 46–170 (SYAIIHHTAG…RQVSATECPG (125 aa)). Histidine 51 is a binding site for Zn(2+). Cysteine 58 and cysteine 64 form a disulfide bridge. Histidine 160 and cysteine 168 together coordinate Zn(2+).

It belongs to the N-acetylmuramoyl-L-alanine amidase 2 family. The cofactor is Zn(2+).

It is found in the secreted. The catalysed reaction is Hydrolyzes the link between N-acetylmuramoyl residues and L-amino acid residues in certain cell-wall glycopeptides.. Its function is as follows. N-acetylmuramyl-L-alanine amidase involved in innate immunity by degrading bacterial peptidoglycans (PGN). Plays a scavenger role by digesting biologically active PGN into biologically inactive fragments. Has no direct bacteriolytic activity. The sequence is that of Peptidoglycan-recognition protein SC1a/b (PGRP-SC1a) from Drosophila simulans (Fruit fly).